The sequence spans 1530 residues: Multidrug resistance-associated protein 1 (1530 aa).

The Extracellular segment spans residues 1-33 (MALRDFCSVDGSDLFWEWNVTWNTSNPDFTKCF). Asn-19 carries an N-linked (GlcNAc...) asparagine glycan. A helical transmembrane segment spans residues 34-54 (QNTVLVWVPCSYLWVCFPFYF). Residues 55-74 (LYLSHHDRGYIQMTHLNKAK) are Cytoplasmic-facing. The helical transmembrane segment at 75–95 (TALGFLLWIVCWADLFYSFWE) threads the bilayer. The Extracellular portion of the chain corresponds to 96 to 100 (RSMGK). Residues 101-121 (LLAPVFLVSPTLLGITMLLAT) form a helical membrane-spanning segment. The Cytoplasmic portion of the chain corresponds to 122–133 (FLIQIERRRGVQ). A helical membrane pass occupies residues 134 to 154 (SSGIMLTFWLIALLCALAILR). Over 155–172 (SKIMTALKEDARVDVFRD) the chain is Extracellular. A helical transmembrane segment spans residues 173 to 193 (VTFYIYFSLVLIQLVLSCFSD). Residues 194-316 (RSPLFSETIN…KERDPSLFKV (123 aa)) are Cytoplasmic-facing. Tyr-277 is modified (phosphotyrosine). Ser-289 carries the post-translational modification Phosphoserine. Residues 317–337 (LYKTFGPYFLMSFLFKAVHDL) traverse the membrane as a helical segment. The region spanning 325–608 (FLMSFLFKAV…LPMVISSIVQ (284 aa)) is the ABC transmembrane type-1 1 domain. Over 338–363 (MMFAGPEILKLLINFVNDKKAPEWQG) the chain is Extracellular. A helical membrane pass occupies residues 364–384 (YFYTALLFISACLQTLVLHQY). Over 385-440 (FHICFVSGMRIKTAVIGAVYRKALVITNAARKSSTVGEIVNLMSVDAQRFMDLATY) the chain is Cytoplasmic. Residues 441–461 (INMIWSAPLQVILALYLLWLN) traverse the membrane as a helical segment. The Extracellular portion of the chain corresponds to 462-464 (LGP). A helical membrane pass occupies residues 465–485 (SVLAGVAVMVLMVPLNAVMAM). Residues 486-547 (KTKTYQVAHM…VLKKSAYLAA (62 aa)) lie on the Cytoplasmic side of the membrane. Residue Lys-503 is modified to N6-succinyllysine. Residues 548 to 568 (VGTFTWVCTPFLVALSTFAVY) form a helical membrane-spanning segment. The Extracellular segment spans residues 569–590 (VTVDENNILDAQKAFVSLALFN). Residues 591-611 (ILRFPLNILPMVISSIVQASV) form a helical membrane-spanning segment. The Cytoplasmic segment spans residues 612–966 (SLKRLRVFLS…VKLSVYWDYM (355 aa)). Residues 644-868 (ITVKNATFTW…DGAFAEFLRT (225 aa)) enclose the ABC transporter 1 domain. Position 678–685 (678–685 (GQVGCGKS)) interacts with ATP. Positions 912–939 (RQLSSSSSYSRDVSQHHTSTAELRKPGP) are disordered. Phosphoserine occurs at positions 915 and 930. The helical transmembrane segment at 967–987 (KAIGLFISFLSIFLFLCNHVA) threads the bilayer. The 282-residue stretch at 974 to 1255 (SFLSIFLFLC…LVRMSSEMET (282 aa)) folds into the ABC transmembrane type-1 2 domain. Residues 988 to 1024 (SLVSNYWLSLWTDDPIVNGTQEHTQVRLSVYGALGIS) are Extracellular-facing. Asn-1005 carries N-linked (GlcNAc...) asparagine glycosylation. Residues 1025 to 1045 (QGITVFGYSMAVSIGGIFASR) traverse the membrane as a helical segment. At 1046–1088 (RLHLDLLHNVLRSPISFFERTPSGNLVNRFSKELDTVDSMIPQ) the chain is on the cytoplasmic side. Residues 1089 to 1109 (VIKMFMGSLFNVIGACIIILL) form a helical membrane-spanning segment. Ala-1110 is a topological domain (extracellular). The chain crosses the membrane as a helical span at residues 1111 to 1131 (TPMAAVIIPPLGLIYFFVQRF). Over 1132 to 1202 (YVASSRQLKR…VANRWLAVRL (71 aa)) the chain is Cytoplasmic. The helical transmembrane segment at 1203-1223 (ECVGNCIVLFASLFAVISRHS) threads the bilayer. Topologically, residues 1224–1225 (LS) are extracellular. A helical transmembrane segment spans residues 1226 to 1246 (AGLVGLSVSYSLQVTTYLNWL). Residues 1247-1530 (VRMSSEMETN…YSMAKDSGLV (284 aa)) lie on the Cytoplasmic side of the membrane. The ABC transporter 2 domain occupies 1292–1526 (VEFRDYGLRY…RGLFYSMAKD (235 aa)). 1326 to 1333 (GRTGAGKS) lines the ATP pocket.

Belongs to the ABC transporter superfamily. ABCC family. Conjugate transporter (TC 3.A.1.208) subfamily. In terms of tissue distribution, expressed in heart, spleen, lung, kidney, skeletal muscle, mammary gland and weaker in brain and liver.

The protein resides in the cell membrane. It is found in the basolateral cell membrane. The enzyme catalyses ATP + H2O + xenobioticSide 1 = ADP + phosphate + xenobioticSide 2.. It carries out the reaction an S-substituted glutathione(in) + ATP + H2O = an S-substituted glutathione(out) + ADP + phosphate + H(+). The catalysed reaction is sphing-4-enine 1-phosphate(in) + ATP + H2O = sphing-4-enine 1-phosphate(out) + ADP + phosphate + H(+). It catalyses the reaction leukotriene C4(in) + ATP + H2O = leukotriene C4(out) + ADP + phosphate + H(+). The enzyme catalyses 17beta-estradiol 17-O-(beta-D-glucuronate)(in) + ATP + H2O = 17beta-estradiol 17-O-(beta-D-glucuronate)(out) + ADP + phosphate + H(+). It carries out the reaction daunorubicin(in) + ATP + H2O = daunorubicin(out) + ADP + phosphate + H(+). The catalysed reaction is vincristine(in) + ATP + H2O = vincristine(out) + ADP + phosphate + H(+). It catalyses the reaction 2',3'-cGAMP(in) + ATP + H2O = 2',3'-cGAMP(out) + ADP + phosphate + H(+). The enzyme catalyses S-[(2E,6E,10E)-geranylgeranyl]-L-glutathione(in) + ATP + H2O = S-[(2E,6E,10E)-geranylgeranyl]-L-glutathione(out) + ADP + phosphate + H(+). It carries out the reaction prostaglandin A2-S-(R)-glutathione(in) + ATP + H2O = prostaglandin A2-S-(R)-glutathione(out) + ADP + phosphate + H(+). The catalysed reaction is prostaglandin A2-S-(S)-glutathione(in) + ATP + H2O = prostaglandin A2-S-(S)-glutathione(out) + ADP + phosphate + H(+). Its activity is regulated as follows. MK 571 inhibits sphingosine 1-phosphate and leukotriene C4 export. Its function is as follows. Mediates export of organic anions and drugs from the cytoplasm. Mediates ATP-dependent transport of glutathione and glutathione conjugates, leukotriene C4, estradiol-17-beta-o-glucuronide, methotrexate, antiviral drugs and other xenobiotics. Confers resistance to anticancer drugs by decreasing accumulation of drug in cells, and by mediating ATP- and GSH-dependent drug export. Hydrolyzes ATP with low efficiency. Catalyzes the export of sphingosine 1-phosphate from mast cells independently of their degranulation. Participates in inflammatory response by allowing export of leukotriene C4 from leukotriene C4-synthesizing cells. Mediates ATP-dependent, GSH-independent cyclic GMP-AMP (cGAMP) export. Thus, by limiting intracellular cGAMP concentrations negatively regulates the cGAS-STING pathway. Exports S-geranylgeranyl-glutathione (GGG) in lymphoid cells and stromal compartments of lymphoid organs. ABCC1 (via extracellular transport) with GGT5 (via GGG catabolism) establish GGG gradients within lymphoid tissues to position P2RY8-positive lymphocytes at germinal centers in lymphoid follicles and restrict their chemotactic transmigration from blood vessels to the bone marrow parenchyma. Mediates basolateral export of GSH-conjugated R- and S-prostaglandin A2 diastereomers in polarized epithelial cells. This is Multidrug resistance-associated protein 1 from Bos taurus (Bovine).